A 189-amino-acid chain; its full sequence is GTPase NRas (189 aa).

GTP-binding positions include 10-18 and 29-30; these read GAGGVGKSA and VD. The Effector region signature appears at 32–40; it reads YDPTIEDSY. Residue 57–61 coordinates GTP; that stretch reads DTAGQ. Residue serine 89 is modified to Phosphoserine. A GTP-binding site is contributed by 116–119; sequence NKCD. The tract at residues 166–185 is hypervariable region; it reads YRMKKLNSSDDGTQGCLGLS. Lysine 170 participates in a covalent cross-link: Glycyl lysine isopeptide (Lys-Gly) (interchain with G-Cter in ubiquitin). Cysteine 181 is lipidated: S-palmitoyl cysteine. The S-farnesyl cysteine moiety is linked to residue cysteine 186. Positions 187–189 are cleaved as a propeptide — removed in mature form; sequence AVM.

Belongs to the small GTPase superfamily. Ras family. In terms of assembly, interacts (active GTP-bound form preferentially) with RGS14. Interacts (active GTP-bound form) with RASSF7. Interacts (active GTP-bound form) with both SHOC2 and PP1c (all isoforms) to form a tertiary complex; SHOC2 and PP1c preferably bind M-Ras/MRAS, but they also bind K-Ras/KRAS, N-Ras/NRAS and H-Ras/HRAS. In terms of processing, palmitoylated by the ZDHHC9-GOLGA7 complex. Depalmitoylated by ABHD17A, ABHD17B and ABHD17C. A continuous cycle of de- and re-palmitoylation regulates rapid exchange between plasma membrane and Golgi. Post-translationally, acetylation at Lys-104 prevents interaction with guanine nucleotide exchange factors (GEFs). Ubiquitinated by the BCR(LZTR1) E3 ubiquitin ligase complex at Lys-170 in a non-degradative manner, leading to inhibit Ras signaling by decreasing Ras association with membranes. In terms of processing, phosphorylation at Ser-89 enhances NRAS association with its downstream effectors.

It is found in the cell membrane. The protein localises to the golgi apparatus membrane. The enzyme catalyses GTP + H2O = GDP + phosphate + H(+). Alternates between an inactive form bound to GDP and an active form bound to GTP. Activated by a guanine nucleotide-exchange factor (GEF) and inactivated by a GTPase-activating protein (GAP). Ras proteins bind GDP/GTP and possess intrinsic GTPase activity. The chain is GTPase NRas (NRAS) from Monodelphis domestica (Gray short-tailed opossum).